A 216-amino-acid polypeptide reads, in one-letter code: Large ribosomal subunit protein uL3 (216 aa).

The protein belongs to the universal ribosomal protein uL3 family. In terms of assembly, part of the 50S ribosomal subunit. Forms a cluster with proteins L14 and L19.

Functionally, one of the primary rRNA binding proteins, it binds directly near the 3'-end of the 23S rRNA, where it nucleates assembly of the 50S subunit. This Symbiobacterium thermophilum (strain DSM 24528 / JCM 14929 / IAM 14863 / T) protein is Large ribosomal subunit protein uL3.